Consider the following 223-residue polypeptide: Large ribosomal subunit protein uL3 (223 aa).

It belongs to the universal ribosomal protein uL3 family. In terms of assembly, part of the 50S ribosomal subunit. Forms a cluster with proteins L14 and L19.

One of the primary rRNA binding proteins, it binds directly near the 3'-end of the 23S rRNA, where it nucleates assembly of the 50S subunit. This chain is Large ribosomal subunit protein uL3, found in Mycoplasma capricolum subsp. capricolum (strain California kid / ATCC 27343 / NCTC 10154).